We begin with the raw amino-acid sequence, 128 residues long: Large ribosomal subunit protein bL12 (128 aa).

Belongs to the bacterial ribosomal protein bL12 family. As to quaternary structure, homodimer. Part of the ribosomal stalk of the 50S ribosomal subunit. Forms a multimeric L10(L12)X complex, where L10 forms an elongated spine to which 2 to 4 L12 dimers bind in a sequential fashion. Binds GTP-bound translation factors.

Functionally, forms part of the ribosomal stalk which helps the ribosome interact with GTP-bound translation factors. Is thus essential for accurate translation. The sequence is that of Large ribosomal subunit protein bL12 from Corynebacterium jeikeium (strain K411).